We begin with the raw amino-acid sequence, 415 residues long: Beta-1,4-glucuronyltransferase 1 (415 aa).

Topologically, residues 1 to 8 (MQMSYAIR) are cytoplasmic. The helical; Signal-anchor for type II membrane protein transmembrane segment at 9 to 36 (CAFYQLLLAALMLVAMLQLLYLSLLSGL) threads the bilayer. Over 37-415 (HGQEEQEQYF…ARYPNSPHRC (379 aa)) the chain is Lumenal. N-linked (GlcNAc...) asparagine glycosylation occurs at Asn-204. Mn(2+)-binding residues include Asp-227 and Asp-229. A glycan (N-linked (GlcNAc...) asparagine) is linked at Asn-300.

Belongs to the glycosyltransferase 49 family. Interacts with LARGE1 and LARGE2. The cofactor is Mn(2+).

Its subcellular location is the golgi apparatus membrane. It carries out the reaction 3-O-[beta-D-Xyl-(1-&gt;4)-Rib-ol-P-Rib-ol-P-3-beta-D-GalNAc-(1-&gt;3)-beta-D-GlcNAc-(1-&gt;4)-(O-6-P-alpha-D-Man)]-Thr-[protein] + UDP-alpha-D-glucuronate = 3-O-[beta-D-GlcA-(1-&gt;3)-beta-D-Xyl-(1-&gt;4)-Rib-ol-P-Rib-ol-P-3-beta-D-GalNAc-(1-&gt;3)-beta-D-GlcNAc-(1-&gt;4)-(O-6-P-alpha-D-Man)]-Thr-[protein] + UDP + H(+). The protein operates within protein modification; protein glycosylation. In terms of biological role, beta-1,4-glucuronyltransferase involved in O-mannosylation of alpha-dystroglycan (DAG1). Transfers a glucuronic acid (GlcA) residue onto a xylose (Xyl) acceptor to produce the glucuronyl-beta-1,4-xylose-beta disaccharide primer, which is further elongated by LARGE1, during synthesis of phosphorylated O-mannosyl glycan. Phosphorylated O-mannosyl glycan is a carbohydrate structure present in alpha-dystroglycan (DAG1), which is required for binding laminin G-like domain-containing extracellular proteins with high affinity. Required for axon guidance; via its function in O-mannosylation of alpha-dystroglycan (DAG1). This Mus musculus (Mouse) protein is Beta-1,4-glucuronyltransferase 1.